Here is a 443-residue protein sequence, read N- to C-terminus: Mimosinase, chloroplastic (443 aa).

The N-terminal 43 residues, 1-43 (MALSSTFLNPLVSSVAVNPQPKITSGKGFRVNCLIRTQQTVIK), are a transit peptide targeting the chloroplast. Residues Y105, R107, G135, M136, S254, and T256 each contribute to the pyridoxal 5'-phosphate site. N6-(pyridoxal phosphate)lysine is present on K257.

It belongs to the trans-sulfuration enzymes family. Forms homodimers. May form homotetramers from two homodimers. Pyridoxal 5'-phosphate serves as cofactor.

It localises to the plastid. Its subcellular location is the chloroplast. The enzyme catalyses L-mimosine + H2O = 3-hydroxy-4H-pyrid-4-one + pyruvate + NH4(+). Functionally, catalyzes the degradation of mimosine, which is a toxic secondary metabolite found in all Leucaena and Mimosa species. The chain is Mimosinase, chloroplastic from Leucaena leucocephala (White popinac).